Reading from the N-terminus, the 77-residue chain is Cysteine-rich protein 1 (77 aa).

Residues 2–63 form the LIM zinc-binding domain; the sequence is PKCPKCDKEV…HPCYSAMFGP (62 aa). Residues Lys9 and Lys22 each carry the N6-acetyllysine modification. Arg68 is subject to Omega-N-methylarginine.

Its function is as follows. Seems to have a role in zinc absorption and may function as an intracellular zinc transport protein. The polypeptide is Cysteine-rich protein 1 (Crip1) (Mus musculus (Mouse)).